Consider the following 105-residue polypeptide: Large ribosomal subunit protein uL23 (105 aa).

This sequence belongs to the universal ribosomal protein uL23 family. As to quaternary structure, part of the 50S ribosomal subunit. Contacts protein L29, and trigger factor when it is bound to the ribosome.

Functionally, one of the early assembly proteins it binds 23S rRNA. One of the proteins that surrounds the polypeptide exit tunnel on the outside of the ribosome. Forms the main docking site for trigger factor binding to the ribosome. The protein is Large ribosomal subunit protein uL23 of Herminiimonas arsenicoxydans.